A 393-amino-acid chain; its full sequence is Outer membrane protein assembly factor BamB (393 aa).

The N-terminal stretch at 1–19 (MQLRKTLLVGLVSVALLSG) is a signal peptide. Residue Cys20 is the site of N-palmitoyl cysteine attachment. Residue Cys20 is the site of S-diacylglycerol cysteine attachment.

This sequence belongs to the BamB family. As to quaternary structure, part of the Bam complex, which is composed of the outer membrane protein BamA, and four lipoproteins BamB, BamC, BamD and BamE.

It is found in the cell outer membrane. In terms of biological role, part of the outer membrane protein assembly complex, which is involved in assembly and insertion of beta-barrel proteins into the outer membrane. The protein is Outer membrane protein assembly factor BamB of Yersinia pestis.